The chain runs to 165 residues: Lithostathine-1 (165 aa).

Positions 1-21 (MARNAYFILLSCLIVLSPSQG) are cleaved as a signal peptide. A Pyrrolidone carboxylic acid modification is found at glutamine 22. The C-type lectin domain occupies 33 to 163 (ISCPEGSNAY…DAQYSFVCKF (131 aa)). Disulfide bonds link cysteine 35–cysteine 46, cysteine 63–cysteine 161, and cysteine 136–cysteine 153. Residue asparagine 129 is glycosylated (N-linked (GlcNAc...) asparagine).

In terms of tissue distribution, expressed only in regenerating islets and normal exocrine pancreas, but not in normal pancreatic islets. Expressed strongly in pancreas, moderately in gall bladder, and weakly in liver.

Its subcellular location is the secreted. Functionally, might act as an inhibitor of spontaneous calcium carbonate precipitation. The protein is Lithostathine-1 (Reg1) of Mus musculus (Mouse).